The following is a 431-amino-acid chain: Histidine--tRNA ligase (431 aa).

Belongs to the class-II aminoacyl-tRNA synthetase family. As to quaternary structure, homodimer.

It localises to the cytoplasm. The catalysed reaction is tRNA(His) + L-histidine + ATP = L-histidyl-tRNA(His) + AMP + diphosphate + H(+). In Finegoldia magna (strain ATCC 29328 / DSM 20472 / WAL 2508) (Peptostreptococcus magnus), this protein is Histidine--tRNA ligase.